A 307-amino-acid chain; its full sequence is Protein rep (307 aa).

Residue tyrosine 219 participates in DNA binding.

Belongs to the Gram-positive plasmids replication protein type 1 family.

The chain is Protein rep (repA) from Bacillus sp.